A 932-amino-acid chain; its full sequence is MTTGFLQKIFGSRNQRLVKQYQKTVATINALETQIEKLTDDQLRGKTDEFRQRVAAGESLDKLLPEAFAVCREASRRVLKMRHFDVQMIGGMVLHYGKIAEMRTGEGKTLVATLPVYLNALAGRGVHVVTVNDYLAQRDAEWMARLYNFLGLSVGINLSGMEHDQKQQAYAADITYGTNNEFGFDYLRDNMVYETDARVQRALNFAVVDEVDSILIDEARTPLIISGQAEDHTELYVRMNALPPLLERQIGEEKADGTGVEKPGDYTLDEKARQVFLTESGHEKAERLLAEWGLIGEGESLYAPQNITLMHHVYAALRAHTLFHKDQHYVVQNGEVVIVDEFTGRLMAGRRWSDGLHQAVEAKEHVKIQSENQTLASITFQNYFRMYAKLAGMTGTADTEAYEFNEIYGLETVVIPTNRPPKRIDKQDQIYKTAKERYDAVIRDIRDCYERGQPVLVGTTSIENSELLSHLLKQVGLPHEVLNAKQHEREAAIVAEAGRPKRITIATNMAGRGTDIVLGGNAEKQAAFIEADDAIPADEKARRIQKLHDEWETLHEEVKAAGGLHIIGTERHESRRIDNQLRGRAGRQGDPGSSRFYLSLDDPLLRIFAGDRVRSIMDRLKMPEGEAIEAGIVTRSIESAQRKVEARNFDIRKQLLEYDDVSNDQRKVIYQQRNELLEAHDITETITAMRHGVITEVVRQFVPEGSIEEQWDVPELEEALRNDWQLDLAIQEMVNESSSITAEEILDAVMTAADEQYEAKVAMVGRESFSAFERSVMLQTVDRLWREHLAALDHLRQGIHLRGYAQKNPKQEYKREAFELFAAMLDAIKQEVTRIVMNVQIQSPEQLEEAAEQIEERGGHLENVEYQHADYADAGAPVANVTAAAAATATADMVGSAMTHSGPGGEMPKVGRNDPCPCGSGKKYKQCHGKLS.

ATP-binding positions include glutamine 87, 105-109 (GEGKT), and aspartate 515. 4 residues coordinate Zn(2+): cysteine 916, cysteine 918, cysteine 927, and histidine 928.

This sequence belongs to the SecA family. In terms of assembly, monomer and homodimer. Part of the essential Sec protein translocation apparatus which comprises SecA, SecYEG and auxiliary proteins SecDF-YajC and YidC. Zn(2+) is required as a cofactor.

The protein resides in the cell inner membrane. Its subcellular location is the cytoplasm. It catalyses the reaction ATP + H2O + cellular proteinSide 1 = ADP + phosphate + cellular proteinSide 2.. Its function is as follows. Part of the Sec protein translocase complex. Interacts with the SecYEG preprotein conducting channel. Has a central role in coupling the hydrolysis of ATP to the transfer of proteins into and across the cell membrane, serving both as a receptor for the preprotein-SecB complex and as an ATP-driven molecular motor driving the stepwise translocation of polypeptide chains across the membrane. This is Protein translocase subunit SecA from Burkholderia orbicola (strain AU 1054).